A 297-amino-acid chain; its full sequence is 1D-myo-inositol 2-acetamido-2-deoxy-alpha-D-glucopyranoside deacetylase (297 aa).

Residues His-14, Asp-17, and His-149 each contribute to the Zn(2+) site.

It belongs to the MshB deacetylase family. Requires Zn(2+) as cofactor.

The enzyme catalyses 1D-myo-inositol 2-acetamido-2-deoxy-alpha-D-glucopyranoside + H2O = 1D-myo-inositol 2-amino-2-deoxy-alpha-D-glucopyranoside + acetate. Its function is as follows. Catalyzes the deacetylation of 1D-myo-inositol 2-acetamido-2-deoxy-alpha-D-glucopyranoside (GlcNAc-Ins) in the mycothiol biosynthesis pathway. The sequence is that of 1D-myo-inositol 2-acetamido-2-deoxy-alpha-D-glucopyranoside deacetylase from Thermomonospora curvata (strain ATCC 19995 / DSM 43183 / JCM 3096 / KCTC 9072 / NBRC 15933 / NCIMB 10081 / Henssen B9).